Reading from the N-terminus, the 842-residue chain is Cullin-8 (842 aa).

The required for interaction with MMS1 stretch occupies residues 1-50; the sequence is MINESVSKREGFHESISRETSASNALGLYNKFNDERNPRYRTMIAELHEF. Residues 755–765 show a composition bias toward polar residues; the sequence is LQSSNTGGERT. The tract at residues 755 to 775 is disordered; that stretch reads LQSSNTGGERTSSAHHEGSNS. Lys791 participates in a covalent cross-link: Glycyl lysine isopeptide (Lys-Gly) (interchain with G-Cter in NEDD8).

The protein belongs to the cullin family. Component of multiple cullin-RING ligases (CRLs) composed of 4 subunits: the RING protein HRT1, the cullin RTT101, a linker protein MMS1, and one of many alternative substrate receptors belonging to a protein family described as DCAF (DDB1- and CUL4-associated factor). Component of a RTT101(MMS1-MMS22) complex with the substrate receptor MMS22. This complex further interacts with RTT107 and CTF4 to form RTT101-MMS1-MMS22-RTT107 and RTT101-MMS1-MMS22-CTF4 complexes respectively. Component of a RTT101(MSS1-CRT10) complex with the substrate receptor CRT10. Component of a RTT101(MSS1-ESC2) complex with the potential substrate receptor ESC2. Component of a RTT101(MSS1-ORC5) complex with the potential substrate receptor ORC5. Interacts (via C-ter) with HRT1; required for ubiquitin-ligase activity. Interacts (via N-ter) with MMS1. In terms of processing, neddylated. HRT1-binding is necessary for RUB1/NEDD8 modification of RTT101. The modification enhances ubiquitin-ligase activity.

Its subcellular location is the cytoplasm. The protein localises to the nucleus. It functions in the pathway protein modification; protein ubiquitination. Functionally, core component of multiple cullin-RING-based E3 ubiquitin-protein ligase complexes (CRLs), which mediate the ubiquitination of target proteins. As a scaffold protein may contribute to catalysis through positioning of the substrate and the ubiquitin-conjugating enzyme. The CRL associates with CDC34 as the E2 ubiquitin-conjugating enzyme. The functional specificity of the CRL depends on the type of the associated substrate receptor protein. RTT101(MMS1-MMS22) promotes fork progression through damaged DNA or natural pause sites by stabilizing replication proteins like the replication fork-pausing complex (FPC) and leading-strand polymerase at stalled replication forks. RTT101(MMS1-MMS22) ubiquitinates the acetylated histones H3K56ac-H4 at lysine residues H3K121, H3K122 and H3K125. Ubiquitination is required for efficient histone deposition during replication-coupled nucleosome assembly, probably by facilitating the transfer of H3-H4 from ASF1 to other chaperones involved in histone deposition. RTT101(MMS1-CRT10) may regulate nucleotide synthesis through transcriptional regulation of ribonucleotide reductase. RTT101(MMS1) is also involved in the non-functional rRNA decay (NRD) of 25S rRNA through the selective, ubiquitination-dependent degradation of nonfunctional ribosomal particles. Ubiquitinates the FACT (facilitates chromatin transcription) complex subunit SPT16 in an MMS1-independent manner. Involved in regulation of Ty1 transposition and protects the genome from Ty1 integration upstream of tRNA genes. This Saccharomyces cerevisiae (strain ATCC 204508 / S288c) (Baker's yeast) protein is Cullin-8 (RTT101).